Consider the following 83-residue polypeptide: Cytochrome b559 subunit alpha (83 aa).

Residues 21-35 (VIHSITIPSLFIAGW) form a helical membrane-spanning segment. A heme-binding site is contributed by His-23.

The protein belongs to the PsbE/PsbF family. In terms of assembly, heterodimer of an alpha subunit and a beta subunit. PSII is composed of 1 copy each of membrane proteins PsbA, PsbB, PsbC, PsbD, PsbE, PsbF, PsbH, PsbI, PsbJ, PsbK, PsbL, PsbM, PsbT, PsbX, PsbY, PsbZ, Psb30/Ycf12, at least 3 peripheral proteins of the oxygen-evolving complex and a large number of cofactors. It forms dimeric complexes. Heme b serves as cofactor.

It is found in the plastid. The protein resides in the chloroplast thylakoid membrane. This b-type cytochrome is tightly associated with the reaction center of photosystem II (PSII). PSII is a light-driven water:plastoquinone oxidoreductase that uses light energy to abstract electrons from H(2)O, generating O(2) and a proton gradient subsequently used for ATP formation. It consists of a core antenna complex that captures photons, and an electron transfer chain that converts photonic excitation into a charge separation. The sequence is that of Cytochrome b559 subunit alpha from Adiantum capillus-veneris (Maidenhair fern).